The primary structure comprises 577 residues: ATP-dependent zinc metalloprotease FtsH (577 aa).

Over 1 to 3 (MKK) the chain is Cytoplasmic. Residues 4–24 (LYWIILIAVVLACSGILMSLH) form a helical membrane-spanning segment. Over 25-98 (LSVTKEEMTY…IKVDNSDSYS (74 aa)) the chain is Extracellular. Residues 99–119 (ATKVIQIILIITVGTGVFLFI) form a helical membrane-spanning segment. Topologically, residues 120-577 (RTSGGKDKPL…IDRICLKEAV (458 aa)) are cytoplasmic. 186 to 193 (GPPGTGKT) contacts ATP. His409 contacts Zn(2+). Glu410 is a catalytic residue. 2 residues coordinate Zn(2+): His413 and Asp487.

The protein in the central section; belongs to the AAA ATPase family. In the C-terminal section; belongs to the peptidase M41 family. Homohexamer. Zn(2+) is required as a cofactor.

It is found in the cell membrane. Its function is as follows. Acts as a processive, ATP-dependent zinc metallopeptidase for both cytoplasmic and membrane proteins. Plays a role in the quality control of integral membrane proteins. This chain is ATP-dependent zinc metalloprotease FtsH, found in Lachnoclostridium phytofermentans (strain ATCC 700394 / DSM 18823 / ISDg) (Clostridium phytofermentans).